We begin with the raw amino-acid sequence, 393 residues long: E3 ubiquitin-protein transferase RMND5B (393 aa).

At M1 the chain carries N-acetylmethionine. The LisH domain occupies 116-148 (QQQILQMAIVEHLYQQGMLSVAEELCQESTLNV). In terms of domain architecture, CTLH spans 155–212 (PFLELNRILEALHEQDLGPALEWAVSHRQRLLELNSSLEFKLHRLHFIRLLAGGPAKQ). Residues 338–379 (CPILRQQTSDSNPPIKLICGHVISRDALNKLINGGKLKCPYC) form an RING-Gid-type zinc finger.

Identified in the CTLH complex that contains GID4, RANBP9 and/or RANBP10, MKLN1, MAEA, RMND5A (or alternatively its paralog RMND5B), GID8, ARMC8, WDR26 and YPEL5. Within this complex, MAEA, RMND5A (or alternatively its paralog RMND5B), GID8, WDR26, and RANBP9 and/or RANBP10 form the catalytic core, while GID4, MKLN1, ARMC8 and YPEL5 have ancillary roles.

It is found in the cytoplasm. Its subcellular location is the cytosol. It carries out the reaction S-ubiquitinyl-[E2 ubiquitin-conjugating enzyme]-L-cysteine + [acceptor protein]-L-lysine = [E2 ubiquitin-conjugating enzyme]-L-cysteine + N(6)-ubiquitinyl-[acceptor protein]-L-lysine.. Functionally, core component of the CTLH E3 ubiquitin-protein ligase complex that selectively accepts ubiquitin from UBE2H and mediates ubiquitination and subsequent proteasomal degradation of the transcription factor HBP1. MAEA and RMND5A are both required for catalytic activity of the CTLH E3 ubiquitin-protein ligase complex. Catalytic activity of the complex is required for normal cell proliferation. The CTLH E3 ubiquitin-protein ligase complex is not required for the degradation of enzymes involved in gluconeogenesis, such as FBP1. This is E3 ubiquitin-protein transferase RMND5B (RMND5B) from Homo sapiens (Human).